Here is a 174-residue protein sequence, read N- to C-terminus: CASP-like protein 4D2 (174 aa).

The Cytoplasmic segment spans residues 1 to 14; that stretch reads MAPPPPSPPAVSLK. Residues 15–35 traverse the membrane as a helical segment; that stretch reads VLLLLLRVLTGVFLVIALIIL. At 36–60 the chain is on the extracellular side; that stretch reads STNSVTIVSQGSALKFHFKDVYAYR. A helical membrane pass occupies residues 61–81; it reads YMLSAAVIGLVYAVIQLFFTI. Residues 82 to 97 are Cytoplasmic-facing; it reads SEFATGVKNPFNYQLD. Residues 98–118 traverse the membrane as a helical segment; sequence FYGDKLISYLVATGSAAGFGV. Topologically, residues 119–150 are extracellular; it reads TKDLKDTFLALVALDSTDPVDKFFSKGYASAS. Residues 151 to 171 traverse the membrane as a helical segment; the sequence is LLLFAFICLAVLSVFSSFAMA. The Cytoplasmic portion of the chain corresponds to 172-174; sequence KRN.

This sequence belongs to the Casparian strip membrane proteins (CASP) family. As to quaternary structure, homodimer and heterodimers.

It is found in the cell membrane. The sequence is that of CASP-like protein 4D2 from Arabidopsis thaliana (Mouse-ear cress).